A 1415-amino-acid polypeptide reads, in one-letter code: DNA-directed RNA polymerase subunit beta' (1415 aa).

Zn(2+) is bound by residues Cys-72, Cys-74, Cys-87, and Cys-90. Residues Asp-463, Asp-465, and Asp-467 each contribute to the Mg(2+) site. The Zn(2+) site is built by Cys-811, Cys-885, Cys-892, and Cys-895.

This sequence belongs to the RNA polymerase beta' chain family. In terms of assembly, the RNAP catalytic core consists of 2 alpha, 1 beta, 1 beta' and 1 omega subunit. When a sigma factor is associated with the core the holoenzyme is formed, which can initiate transcription. Mg(2+) serves as cofactor. It depends on Zn(2+) as a cofactor.

The enzyme catalyses RNA(n) + a ribonucleoside 5'-triphosphate = RNA(n+1) + diphosphate. Functionally, DNA-dependent RNA polymerase catalyzes the transcription of DNA into RNA using the four ribonucleoside triphosphates as substrates. In Cereibacter sphaeroides (strain ATCC 17023 / DSM 158 / JCM 6121 / CCUG 31486 / LMG 2827 / NBRC 12203 / NCIMB 8253 / ATH 2.4.1.) (Rhodobacter sphaeroides), this protein is DNA-directed RNA polymerase subunit beta'.